The chain runs to 142 residues: Hemoglobin subunit beta-C (142 aa).

Residues 1–142 form the Globin domain; that stretch reads MPNKALITGF…VASALAHRYH (142 aa). Heme b-binding residues include histidine 59 and histidine 88.

It belongs to the globin family. Heterotetramer of two alpha chains and two beta chains. Red blood cells.

In terms of biological role, involved in oxygen transport from the lung to the various peripheral tissues. This is Hemoglobin subunit beta-C (HBBC) from Capra hircus (Goat).